A 290-amino-acid polypeptide reads, in one-letter code: RWD domain-containing protein 2B (290 aa).

Residues 12–136 (SELDLLASMF…EWVKEHAFDY (125 aa)) enclose the RWD domain.

The chain is RWD domain-containing protein 2B (Rwdd2b) from Mus musculus (Mouse).